We begin with the raw amino-acid sequence, 303 residues long: 2-dehydropantoate 2-reductase (303 aa).

Residues Gly-7 to Gly-12, Asn-98, and Ala-122 each bind NADP(+). Substrate is bound at residue Asn-98. Lys-176 acts as the Proton donor in catalysis. Residues Asn-180, Asn-184, Asn-194, and Ser-244 each contribute to the substrate site. Glu-256 serves as a coordination point for NADP(+).

The protein belongs to the ketopantoate reductase family. As to quaternary structure, monomer.

Its subcellular location is the cytoplasm. It carries out the reaction (R)-pantoate + NADP(+) = 2-dehydropantoate + NADPH + H(+). It participates in cofactor biosynthesis; (R)-pantothenate biosynthesis; (R)-pantoate from 3-methyl-2-oxobutanoate: step 2/2. In terms of biological role, catalyzes the NADPH-dependent reduction of ketopantoate into pantoic acid. This Escherichia coli O157:H7 protein is 2-dehydropantoate 2-reductase (panE).